A 122-amino-acid polypeptide reads, in one-letter code: uncharacterized protein (122 aa).

A compositionally biased stretch (basic and acidic residues) spans 1-15 (MAEPGGRGDYHKDGR). The segment at 1–26 (MAEPGGRGDYHKDGRPPSLSRSPLFT) is disordered.

This is an uncharacterized protein from Macaca fascicularis (Crab-eating macaque).